The chain runs to 247 residues: Flavin-dependent thymidylate synthase (247 aa).

A ThyX domain is found at 1–237 (MDVKLLEATD…PKTFEYYEQE (237 aa)). Residues 85–88 (QITR), 98–100 (SMR), and arginine 176 each bind dUMP. 88-90 (RHR) serves as a coordination point for FAD. The ThyX motif signature appears at 88-98 (RHRHVSFDVQS). Residues 192–194 (NAR) and histidine 198 each bind FAD. Arginine 203 is a binding site for dUMP. The Involved in ionization of N3 of dUMP, leading to its activation role is filled by arginine 203.

This sequence belongs to the thymidylate synthase ThyX family. In terms of assembly, homotetramer. FAD is required as a cofactor.

The catalysed reaction is dUMP + (6R)-5,10-methylene-5,6,7,8-tetrahydrofolate + NADPH + H(+) = dTMP + (6S)-5,6,7,8-tetrahydrofolate + NADP(+). Its pathway is pyrimidine metabolism; dTTP biosynthesis. Catalyzes the reductive methylation of 2'-deoxyuridine-5'-monophosphate (dUMP) to 2'-deoxythymidine-5'-monophosphate (dTMP) while utilizing 5,10-methylenetetrahydrofolate (mTHF) as the methyl donor, and NADPH and FADH(2) as the reductant. The chain is Flavin-dependent thymidylate synthase from Haloarcula marismortui (strain ATCC 43049 / DSM 3752 / JCM 8966 / VKM B-1809) (Halobacterium marismortui).